Here is a 521-residue protein sequence, read N- to C-terminus: Bifunctional purine biosynthesis protein PurH (521 aa).

Residues 1–145 form the MGS-like domain; that stretch reads MIKQALISVS…KNHRDVTVVV (145 aa).

Belongs to the PurH family.

The enzyme catalyses (6R)-10-formyltetrahydrofolate + 5-amino-1-(5-phospho-beta-D-ribosyl)imidazole-4-carboxamide = 5-formamido-1-(5-phospho-D-ribosyl)imidazole-4-carboxamide + (6S)-5,6,7,8-tetrahydrofolate. It catalyses the reaction IMP + H2O = 5-formamido-1-(5-phospho-D-ribosyl)imidazole-4-carboxamide. Its pathway is purine metabolism; IMP biosynthesis via de novo pathway; 5-formamido-1-(5-phospho-D-ribosyl)imidazole-4-carboxamide from 5-amino-1-(5-phospho-D-ribosyl)imidazole-4-carboxamide (10-formyl THF route): step 1/1. It functions in the pathway purine metabolism; IMP biosynthesis via de novo pathway; IMP from 5-formamido-1-(5-phospho-D-ribosyl)imidazole-4-carboxamide: step 1/1. The sequence is that of Bifunctional purine biosynthesis protein PurH from Burkholderia ambifaria (strain MC40-6).